We begin with the raw amino-acid sequence, 272 residues long: Ribosomal RNA small subunit methyltransferase A (272 aa).

The S-adenosyl-L-methionine site is built by Asn-20, Leu-22, Gly-47, Glu-68, Asp-93, and Asn-114.

Belongs to the class I-like SAM-binding methyltransferase superfamily. rRNA adenine N(6)-methyltransferase family. RsmA subfamily.

It is found in the cytoplasm. The enzyme catalyses adenosine(1518)/adenosine(1519) in 16S rRNA + 4 S-adenosyl-L-methionine = N(6)-dimethyladenosine(1518)/N(6)-dimethyladenosine(1519) in 16S rRNA + 4 S-adenosyl-L-homocysteine + 4 H(+). Its function is as follows. Specifically dimethylates two adjacent adenosines (A1518 and A1519) in the loop of a conserved hairpin near the 3'-end of 16S rRNA in the 30S particle. May play a critical role in biogenesis of 30S subunits. The protein is Ribosomal RNA small subunit methyltransferase A of Aliivibrio fischeri (strain ATCC 700601 / ES114) (Vibrio fischeri).